Here is a 695-residue protein sequence, read N- to C-terminus: NAD(P)H-quinone oxidoreductase subunit 5, chloroplastic (695 aa).

15 consecutive transmembrane segments (helical) span residues 1 to 21, 32 to 52, 81 to 101, 117 to 137, 139 to 159, 177 to 197, 211 to 231, 250 to 270, 278 to 298, 319 to 339, 346 to 366, 388 to 408, 417 to 437, 535 to 555, and 594 to 614; these read WIIP…LILF, WAFQ…YLSI, IDPL…MVLI, FAYM…SNLI, IYIF…FWFT, GDFG…SFEF, NEVN…GAVA, TPIS…FLVA, VIPY…LLGA, LGYM…FHLI, ALLF…VGYS, ITFL…CFWS, WLYS…TAFY, LFPI…GIPF, and VLSV…YKPI.

This sequence belongs to the complex I subunit 5 family. In terms of assembly, NDH is composed of at least 16 different subunits, 5 of which are encoded in the nucleus.

It localises to the plastid. The protein localises to the chloroplast thylakoid membrane. The catalysed reaction is a plastoquinone + NADH + (n+1) H(+)(in) = a plastoquinol + NAD(+) + n H(+)(out). It carries out the reaction a plastoquinone + NADPH + (n+1) H(+)(in) = a plastoquinol + NADP(+) + n H(+)(out). NDH shuttles electrons from NAD(P)H:plastoquinone, via FMN and iron-sulfur (Fe-S) centers, to quinones in the photosynthetic chain and possibly in a chloroplast respiratory chain. The immediate electron acceptor for the enzyme in this species is believed to be plastoquinone. Couples the redox reaction to proton translocation, and thus conserves the redox energy in a proton gradient. This is NAD(P)H-quinone oxidoreductase subunit 5, chloroplastic (ndhF) from Capsicum baccatum (Peruvian pepper).